Here is a 176-residue protein sequence, read N- to C-terminus: RNA pyrophosphohydrolase (176 aa).

The Nudix hydrolase domain occupies 6 to 149 (GYRPNVGIIL…KRQVYQQALF (144 aa)). The Nudix box signature appears at 38-59 (GGIKHGESPEQAMFRELFEEVG).

It belongs to the Nudix hydrolase family. RppH subfamily. A divalent metal cation is required as a cofactor.

Accelerates the degradation of transcripts by removing pyrophosphate from the 5'-end of triphosphorylated RNA, leading to a more labile monophosphorylated state that can stimulate subsequent ribonuclease cleavage. The protein is RNA pyrophosphohydrolase of Aromatoleum aromaticum (strain DSM 19018 / LMG 30748 / EbN1) (Azoarcus sp. (strain EbN1)).